Here is a 406-residue protein sequence, read N- to C-terminus: Putative phosphate permease TK2061 (406 aa).

Helical transmembrane passes span 2 to 22 (AVMD…AWAI), 45 to 65 (AVLI…KSVT), 82 to 102 (TVLI…LVIA), 115 to 135 (IIGG…VNWG), 139 to 159 (QVVL…FLVF), 182 to 202 (FWIG…VLHG), 208 to 228 (GVLF…FLTL), 288 to 308 (VPVP…GVAT), 324 to 346 (LTNT…ASWL), and 385 to 405 (FVTV…LMIV).

This sequence belongs to the inorganic phosphate transporter (PiT) (TC 2.A.20) family.

The protein localises to the cell membrane. Its function is as follows. Potential transporter for phosphate. This chain is Putative phosphate permease TK2061, found in Thermococcus kodakarensis (strain ATCC BAA-918 / JCM 12380 / KOD1) (Pyrococcus kodakaraensis (strain KOD1)).